A 457-amino-acid chain; its full sequence is tRNA-2-methylthio-N(6)-dimethylallyladenosine synthase (457 aa).

One can recognise an MTTase N-terminal domain in the interval 4–119 (RNFHIITFGC…APDAIERLYA (116 aa)). Positions 13, 48, 82, 164, 168, and 171 each coordinate [4Fe-4S] cluster. One can recognise a Radical SAM core domain in the interval 150–385 (NTLALMAYVN…QATQLEHSTS (236 aa)). In terms of domain architecture, TRAM spans 388–456 (KSRVGVETTV…KHSLVAEPLI (69 aa)).

The protein belongs to the methylthiotransferase family. MiaB subfamily. Monomer. [4Fe-4S] cluster is required as a cofactor.

It localises to the cytoplasm. It carries out the reaction N(6)-dimethylallyladenosine(37) in tRNA + (sulfur carrier)-SH + AH2 + 2 S-adenosyl-L-methionine = 2-methylsulfanyl-N(6)-dimethylallyladenosine(37) in tRNA + (sulfur carrier)-H + 5'-deoxyadenosine + L-methionine + A + S-adenosyl-L-homocysteine + 2 H(+). Catalyzes the methylthiolation of N6-(dimethylallyl)adenosine (i(6)A), leading to the formation of 2-methylthio-N6-(dimethylallyl)adenosine (ms(2)i(6)A) at position 37 in tRNAs that read codons beginning with uridine. The polypeptide is tRNA-2-methylthio-N(6)-dimethylallyladenosine synthase (Lawsonia intracellularis (strain PHE/MN1-00)).